We begin with the raw amino-acid sequence, 238 residues long: MIYAGILAGGIGSRMGNVPLPKQFLDIDNKPILIHTIEKFILVSEFNEIIIATPAQWISHTQDILKKYNITDQRVKVVAGGTDRNETIMNIIDYIRNVNGINNDDVIVTHDAVRPFLTQRIIKENIEVAEKYGAVDTVIEAIDTIVMSKDKQNIHSIPVRNEMYQGQTPQSFNIKLLQDSYRALSSAQKEILSDACKIIVESGHPVKLVRGELYNIKVTTPYDLKVANAIIQGDIADD.

CTP contacts are provided by residues 7 to 10 (LAGG) and 81 to 87 (GTDRNET).

This sequence belongs to the IspD/TarI cytidylyltransferase family. TarI subfamily.

The enzyme catalyses D-ribitol 5-phosphate + CTP + H(+) = CDP-L-ribitol + diphosphate. It functions in the pathway cell wall biogenesis; poly(ribitol phosphate) teichoic acid biosynthesis. Functionally, catalyzes the transfer of the cytidylyl group of CTP to D-ribitol 5-phosphate. The protein is Ribitol-5-phosphate cytidylyltransferase 2 of Staphylococcus aureus (strain MSSA476).